The sequence spans 95 residues: Large ribosomal subunit protein uL23 (95 aa).

It belongs to the universal ribosomal protein uL23 family. In terms of assembly, part of the 50S ribosomal subunit. Contacts protein L29, and trigger factor when it is bound to the ribosome.

One of the early assembly proteins it binds 23S rRNA. One of the proteins that surrounds the polypeptide exit tunnel on the outside of the ribosome. Forms the main docking site for trigger factor binding to the ribosome. This Fusobacterium nucleatum subsp. nucleatum (strain ATCC 25586 / DSM 15643 / BCRC 10681 / CIP 101130 / JCM 8532 / KCTC 2640 / LMG 13131 / VPI 4355) protein is Large ribosomal subunit protein uL23.